The sequence spans 116 residues: UPF0342 protein LBA1592 (116 aa).

The protein belongs to the UPF0342 family.

This Lactobacillus acidophilus (strain ATCC 700396 / NCK56 / N2 / NCFM) protein is UPF0342 protein LBA1592.